We begin with the raw amino-acid sequence, 175 residues long: Nudix hydrolase 25 (175 aa).

Residues 7–155 form the Nudix hydrolase domain; it reads GYRPNVGVCL…KRPTYEEVIK (149 aa). Positions 40, 55, and 59 each coordinate Mn(2+). Residues 40–61 carry the Nudix box motif; sequence GGIEDGEDPKSAAMRELQEETG.

It belongs to the Nudix hydrolase family. It depends on Mn(2+) as a cofactor.

It catalyses the reaction P(1),P(4)-bis(5'-guanosyl) tetraphosphate + H2O = GMP + GTP + 2 H(+). Mediates the hydrolysis of diadenosine 5',5''-P(1)P(4) tetraphosphate (Ap(4)A), a signaling molecule involved in regulation of DNA replication and repair. The sequence is that of Nudix hydrolase 25 from Arabidopsis thaliana (Mouse-ear cress).